A 478-amino-acid polypeptide reads, in one-letter code: DNA-directed RNA polymerase subunit alpha (478 aa).

The segment at 1-341 (MNKKIQDFFL…LDCMRLLNYE (341 aa)) is alpha N-terminal domain (alpha-NTD). Residues 365-478 (RFYNSREDKT…KLGSRNEKNL (114 aa)) are alpha C-terminal domain (alpha-CTD).

It belongs to the RNA polymerase alpha chain family. As to quaternary structure, in plastids the minimal PEP RNA polymerase catalytic core is composed of four subunits: alpha, beta, beta', and beta''. When a (nuclear-encoded) sigma factor is associated with the core the holoenzyme is formed, which can initiate transcription.

The protein localises to the plastid. Its subcellular location is the chloroplast. The enzyme catalyses RNA(n) + a ribonucleoside 5'-triphosphate = RNA(n+1) + diphosphate. Functionally, DNA-dependent RNA polymerase catalyzes the transcription of DNA into RNA using the four ribonucleoside triphosphates as substrates. This is DNA-directed RNA polymerase subunit alpha (rpoA) from Tetradesmus obliquus (Green alga).